Consider the following 264-residue polypeptide: 3-methyl-2-oxobutanoate hydroxymethyltransferase (264 aa).

Positions 41 and 80 each coordinate Mg(2+). 3-methyl-2-oxobutanoate contacts are provided by residues 41-42, Asp80, and Lys109; that span reads DS. A Mg(2+)-binding site is contributed by Glu111. Glu178 (proton acceptor) is an active-site residue.

It belongs to the PanB family. Homodecamer; pentamer of dimers. Requires Mg(2+) as cofactor.

The protein localises to the cytoplasm. The enzyme catalyses 3-methyl-2-oxobutanoate + (6R)-5,10-methylene-5,6,7,8-tetrahydrofolate + H2O = 2-dehydropantoate + (6S)-5,6,7,8-tetrahydrofolate. It functions in the pathway cofactor biosynthesis; (R)-pantothenate biosynthesis; (R)-pantoate from 3-methyl-2-oxobutanoate: step 1/2. Its function is as follows. Catalyzes the reversible reaction in which hydroxymethyl group from 5,10-methylenetetrahydrofolate is transferred onto alpha-ketoisovalerate to form ketopantoate. The sequence is that of 3-methyl-2-oxobutanoate hydroxymethyltransferase from Thermosipho melanesiensis (strain DSM 12029 / CIP 104789 / BI429).